We begin with the raw amino-acid sequence, 403 residues long: Poly(rC)-binding protein 4 (403 aa).

KH domains are found at residues threonine 17–glycine 67, proline 101–glycine 154, and threonine 241–glycine 293.

Its subcellular location is the cytoplasm. Functionally, single-stranded nucleic acid binding protein that binds preferentially to oligo dC. The polypeptide is Poly(rC)-binding protein 4 (PCBP4) (Homo sapiens (Human)).